The sequence spans 66 residues: FMRFamide-like neuropeptide 21 (66 aa).

An N-terminal signal peptide occupies residues 1-16 (MRLFILLSCLLAWVLA).

This sequence belongs to the FARP (FMRFamide related peptide) family. May be processed by convertase egl-3. As to expression, expressed in the ADL, ASE and ASH sensory neurons, the URA motor neurons and the MC, M2 and M4 pharyngeal neurons.

It is found in the secreted. FMRFamide-like neuropeptide. Involved in modulating locomotion quiescence during the sleep-like state called lethargus which occurs during molting between larval and adult stages, acting via the G-protein coupled receptor npr-1. Plays a role in modulating social and feeding behavior. Functionally, ligand to G-protein coupled receptor npr-1. In Caenorhabditis elegans, this protein is FMRFamide-like neuropeptide 21.